The following is a 269-amino-acid chain: Formamidopyrimidine-DNA glycosylase (269 aa).

The active-site Schiff-base intermediate with DNA is the Pro2. Glu3 serves as the catalytic Proton donor. Lys57 (proton donor; for beta-elimination activity) is an active-site residue. Residues His90, Arg109, and Lys150 each coordinate DNA. Residues 235–269 (QVYGRKGEPCRVCGTPIVATKHAQRATFYCRQCQK) form an FPG-type zinc finger. Catalysis depends on Arg259, which acts as the Proton donor; for delta-elimination activity.

The protein belongs to the FPG family. As to quaternary structure, monomer. Zn(2+) serves as cofactor.

It carries out the reaction Hydrolysis of DNA containing ring-opened 7-methylguanine residues, releasing 2,6-diamino-4-hydroxy-5-(N-methyl)formamidopyrimidine.. The catalysed reaction is 2'-deoxyribonucleotide-(2'-deoxyribose 5'-phosphate)-2'-deoxyribonucleotide-DNA = a 3'-end 2'-deoxyribonucleotide-(2,3-dehydro-2,3-deoxyribose 5'-phosphate)-DNA + a 5'-end 5'-phospho-2'-deoxyribonucleoside-DNA + H(+). Involved in base excision repair of DNA damaged by oxidation or by mutagenic agents. Acts as a DNA glycosylase that recognizes and removes damaged bases. Has a preference for oxidized purines, such as 7,8-dihydro-8-oxoguanine (8-oxoG). Has AP (apurinic/apyrimidinic) lyase activity and introduces nicks in the DNA strand. Cleaves the DNA backbone by beta-delta elimination to generate a single-strand break at the site of the removed base with both 3'- and 5'-phosphates. In Escherichia coli (strain 55989 / EAEC), this protein is Formamidopyrimidine-DNA glycosylase.